The following is a 1295-amino-acid chain: Serine protease sat autotransporter (1295 aa).

The N-terminal stretch at 1-49 is a signal peptide; that stretch reads MNKIYSLKYSAATGGLIAVSELAKRVSGKTNRKLVATMLSLAVAGTVNA. The Peptidase S6 domain maps to 51–300; sequence NIDISNVWAR…TKYNDKLVSE (250 aa). Active-site charge relay system residues include His-121, Asp-149, and Ser-256. An Autotransporter domain is found at 1029 to 1295; sequence DINGESGAWA…AINANFRYSF (267 aa).

Post-translationally, cleaved to release the mature protein from the outer membrane.

It localises to the periplasm. Its subcellular location is the secreted. It is found in the cell surface. The protein localises to the cell outer membrane. Its activity is regulated as follows. Inhibited by phenylmethylsulfonyl fluoride and Pefabloc. Its function is as follows. Shows serine protease activity and displays cytophatic activity, including elongation, rounding, and detachment of a proportion of the cells from monolayer in culture. Triggers vacuolation within the cytoplasm of the human bladder and kidney cells. The sequence is that of Serine protease sat autotransporter (sat) from Escherichia coli O6:H1 (strain CFT073 / ATCC 700928 / UPEC).